The primary structure comprises 567 residues: Restriction of telomere capping protein 5 (567 aa).

In terms of domain architecture, TLDc spans 289–515 (KVMTPALLAQ…IQDVEVWGCG (227 aa)).

This sequence belongs to the RTC5 family.

The protein localises to the cytoplasm. Its function is as follows. May be involved in a process influencing telomere capping. This is Restriction of telomere capping protein 5 (RTC5) from Saccharomyces cerevisiae (strain RM11-1a) (Baker's yeast).